The primary structure comprises 761 residues: Hyperosmolality-gated Ca2+ permeable channel 1.6 (761 aa).

The next 10 membrane-spanning stretches (helical) occupy residues 7 to 27 (IGVAAAINIVTAFAFLLAFAI), 101 to 121 (IYLLGLKIFFPIACVAFTTMV), 156 to 176 (PRFWVHLCMAYAITFWTCFIL), 375 to 395 (LIVGVAYFFLTFFFMIPIAFV), 419 to 439 (LLKSIIQGFLPGIALKIFLLF), 467 to 487 (FYMFQFINVFLGSIVTGTAFQ), 512 to 532 (ATFFITYIMVDGWAGVAGEIL), 583 to 603 (AAVSPILLPFILVFFGLAFVV), 630 to 650 (VVTALVVSQLLLMGLLSTKHA), and 653 to 673 (STPLLLVLPLLTIGFHKHCKN). Residues 718 to 731 (RVGEDPEPEEKLES) show a composition bias toward basic and acidic residues. The segment at 718–761 (RVGEDPEPEEKLESDMSPPDLVATKRWSWRNTPLPSKDSCREIP) is disordered.

Belongs to the CSC1 (TC 1.A.17) family.

Its subcellular location is the membrane. Functionally, acts as an osmosensitive calcium-permeable cation channel. The sequence is that of Hyperosmolality-gated Ca2+ permeable channel 1.6 from Arabidopsis thaliana (Mouse-ear cress).